Here is a 921-residue protein sequence, read N- to C-terminus: Isoleucine--tRNA ligase (921 aa).

The short motif at 57 to 67 (PYANGDIHMGH) is the 'HIGH' region element. Glu552 serves as a coordination point for L-isoleucyl-5'-AMP. The 'KMSKS' region motif lies at 593–597 (KMSKS). Lys596 contributes to the ATP binding site. Residues Cys888, Cys891, Cys908, and Cys911 each contribute to the Zn(2+) site.

Belongs to the class-I aminoacyl-tRNA synthetase family. IleS type 1 subfamily. Monomer. It depends on Zn(2+) as a cofactor.

The protein localises to the cytoplasm. It carries out the reaction tRNA(Ile) + L-isoleucine + ATP = L-isoleucyl-tRNA(Ile) + AMP + diphosphate. In terms of biological role, catalyzes the attachment of isoleucine to tRNA(Ile). As IleRS can inadvertently accommodate and process structurally similar amino acids such as valine, to avoid such errors it has two additional distinct tRNA(Ile)-dependent editing activities. One activity is designated as 'pretransfer' editing and involves the hydrolysis of activated Val-AMP. The other activity is designated 'posttransfer' editing and involves deacylation of mischarged Val-tRNA(Ile). The sequence is that of Isoleucine--tRNA ligase from Bacillus cytotoxicus (strain DSM 22905 / CIP 110041 / 391-98 / NVH 391-98).